A 595-amino-acid polypeptide reads, in one-letter code: Metacaspase-1 (595 aa).

Active-site residues include His411 and Cys466.

The protein belongs to the peptidase C14B family. Monomer.

Its activity is regulated as follows. Activated by Ca(2+). In terms of biological role, cysteine protease that cleaves specifically after arginine or lysine residues. The chain is Metacaspase-1 from Plasmodium berghei (strain Anka).